We begin with the raw amino-acid sequence, 224 residues long: UPF0758 protein RSc2444 (224 aa).

One can recognise an MPN domain in the interval 102–224; the sequence is TLESPQSVKD…VYSFLEHGKM (123 aa). His-173, His-175, and Asp-186 together coordinate Zn(2+). Positions 173–186 match the JAMM motif motif; it reads HNHPTGHVEPSESD.

It belongs to the UPF0758 family.

The chain is UPF0758 protein RSc2444 from Ralstonia nicotianae (strain ATCC BAA-1114 / GMI1000) (Ralstonia solanacearum).